We begin with the raw amino-acid sequence, 577 residues long: Aspartate--tRNA(Asp) ligase (577 aa).

Residue glutamate 172 participates in L-aspartate binding. The aspartate stretch occupies residues 196 to 199 (QLFK). Residue arginine 218 coordinates L-aspartate. ATP-binding positions include 218–220 (RDE) and glutamine 227. L-aspartate is bound at residue histidine 438. Residue glutamate 473 coordinates ATP. L-aspartate is bound at residue arginine 480. ATP is bound at residue 525–528 (GFDR).

The protein belongs to the class-II aminoacyl-tRNA synthetase family. Type 1 subfamily. As to quaternary structure, homodimer.

Its subcellular location is the cytoplasm. It catalyses the reaction tRNA(Asp) + L-aspartate + ATP = L-aspartyl-tRNA(Asp) + AMP + diphosphate. Catalyzes the attachment of L-aspartate to tRNA(Asp) in a two-step reaction: L-aspartate is first activated by ATP to form Asp-AMP and then transferred to the acceptor end of tRNA(Asp). Is specific for tRNA(Asp) since it cannot aspartylate tRNA(Asn). In Deinococcus radiodurans (strain ATCC 13939 / DSM 20539 / JCM 16871 / CCUG 27074 / LMG 4051 / NBRC 15346 / NCIMB 9279 / VKM B-1422 / R1), this protein is Aspartate--tRNA(Asp) ligase (aspS1).